The following is a 317-amino-acid chain: MHNYLDFEKPISDLEGKIIELKKLATEDESIDTTDEIGRLEVRVREAIVEIYSKLNPWQKTQVARHPQRPHFVDYAKTLFQEFTPLAGDRKFSEDAAIQAGLARFRGQPVAVVGQEKGNDTKTRLKHNFGSPRPEGYRKAIRILEMADRFGLPVISLVDTAGAYPGVGAEERGQAEAIARSTEMCLGVKVPLVSVVIGEGGSGGAIAIATGNKVYMLEHSIYSVISPEGAASILWRDSTRAREAATNMKITAEDLKSLGVIDGIISEPLGGAHRDPDSVIAATGDVIANALGEMASRSGEQLRNERRQKFLNMGRNL.

In terms of domain architecture, CoA carboxyltransferase C-terminal spans 40–293; it reads LEVRVREAIV…GDVIANALGE (254 aa).

This sequence belongs to the AccA family. As to quaternary structure, acetyl-CoA carboxylase is a heterohexamer composed of biotin carboxyl carrier protein (AccB), biotin carboxylase (AccC) and two subunits each of ACCase subunit alpha (AccA) and ACCase subunit beta (AccD).

The protein resides in the cytoplasm. The enzyme catalyses N(6)-carboxybiotinyl-L-lysyl-[protein] + acetyl-CoA = N(6)-biotinyl-L-lysyl-[protein] + malonyl-CoA. It participates in lipid metabolism; malonyl-CoA biosynthesis; malonyl-CoA from acetyl-CoA: step 1/1. Functionally, component of the acetyl coenzyme A carboxylase (ACC) complex. First, biotin carboxylase catalyzes the carboxylation of biotin on its carrier protein (BCCP) and then the CO(2) group is transferred by the carboxyltransferase to acetyl-CoA to form malonyl-CoA. This Rhizobium leguminosarum bv. trifolii (strain WSM2304) protein is Acetyl-coenzyme A carboxylase carboxyl transferase subunit alpha.